Reading from the N-terminus, the 292-residue chain is Homeobox-leucine zipper protein HOX19 (292 aa).

3 disordered regions span residues 14–85, 99–133, and 217–236; these read LALG…HSVS, RERAEEADGERVSSTAAGRDDDDDGSTRKKLRLTK, and FAPPPPSSAAHQPSPAPPAP. Over residues 28-74 the composition is skewed to low complexity; sequence TDAAAAHRGGCRRPSPSSQCPPLEPSLTLSLPDDAAAGAAATATATA. Basic and acidic residues predominate over residues 99–109; that stretch reads RERAEEADGER. A DNA-binding region (homeobox) is located at residues 124–183; the sequence is STRKKLRLTKEQSALLEDRFREHSTLNPKQKVALAKQLNLRPRQVEVWFQNRRARTKLKQ. The tract at residues 182-226 is leucine-zipper; it reads KQTEVDCEFLKRCCETLTEENRRLQRELQELRALKFAPPPPSSAA.

It belongs to the HD-ZIP homeobox family. Class II subfamily. As to expression, expressed in seedlings, roots, stems, leaf sheaths and blades and panicles.

The protein resides in the nucleus. Probable transcription factor. This Oryza sativa subsp. japonica (Rice) protein is Homeobox-leucine zipper protein HOX19 (HOX19).